A 162-amino-acid chain; its full sequence is Caveolin-2 (162 aa).

Residues 1–86 (MGLESEKADV…FEISKYVLYK (86 aa)) lie on the Cytoplasmic side of the membrane. Phosphotyrosine is present on Tyr-19. Residues Ser-20, Ser-23, and Ser-36 each carry the phosphoserine modification. Positions 87 to 107 (FLTFFLAIPLAFAAGILFAIL) form an intramembrane region, helical. Topologically, residues 108-162 (SCLHIWIIMPFVKTCLMVLPSVQTIWKSVTDVVIAPLCTSVGRSFSSVSLQLSQD) are cytoplasmic.

The protein belongs to the caveolin family. As to quaternary structure, monomer or homodimer. Interacts with CAV1; the interaction forms a stable heterooligomeric complex that is required for targeting to lipid rafts and for caveolae formation. Tyrosine phosphorylated forms do not form heterooligomers with the Tyr-19-phosphorylated form existing as a monomer or dimer. Interacts (tyrosine phosphorylated form) with the SH2 domain-containing proteins, RASA1, NCK1 and SRC. Interacts (tyrosine phosphorylated form) with INSR. Interacts (Tyr-19 phosphorylated form) with MAPK1 (phosphorylated form); the interaction, promoted by insulin, leads to nuclear location and MAPK1 activation. Interacts with STAT3; the interaction is increased on insulin-induced tyrosine phosphorylation leading to STAT activation. In terms of processing, phosphorylated on serine and tyrosine residues. CAV1 promotes phosphorylation on Ser-23 which then targets the complex to the plasma membrane, lipid rafts and caveolae. Phosphorylation on Ser-36 appears to modulate mitosis in endothelial cells. Phosphorylation on Tyr-19 is required for insulin-induced phosphorylation of MAPK1 and DNA binding of STAT3. Tyrosine phosphorylation is induced by both EGF and insulin.

Its subcellular location is the nucleus. It is found in the golgi apparatus membrane. It localises to the cell membrane. The protein localises to the membrane. The protein resides in the caveola. May act as a scaffolding protein within caveolar membranes. Interacts directly with G-protein alpha subunits and can functionally regulate their activity. Acts as an accessory protein in conjunction with CAV1 in targeting to lipid rafts and driving caveolae formation. The Ser-36 phosphorylated form has a role in modulating mitosis in endothelial cells. Positive regulator of cellular mitogenesis of the MAPK signaling pathway. Required for the insulin-stimulated nuclear translocation and activation of MAPK1 and STAT3, and the subsequent regulation of cell cycle progression. This chain is Caveolin-2 (CAV2), found in Echinops telfairi (Lesser hedgehog tenrec).